A 194-amino-acid polypeptide reads, in one-letter code: Holliday junction branch migration complex subunit RuvA (194 aa).

A domain I region spans residues 1–64; that stretch reads MISRLTGKLV…EDAHLLFGFA (64 aa). The tract at residues 65–143 is domain II; it reads TAEERKTFRQ…AHTVTDGLFA (79 aa). Residues 144–147 form a flexible linker region; it reads ASPA. The segment at 147 to 194 is domain III; sequence AADETEDIVSTLLALGYNEREAKAAVKGVPKGTDVGEGVRLALKNLLK.

Belongs to the RuvA family. In terms of assembly, homotetramer. Forms an RuvA(8)-RuvB(12)-Holliday junction (HJ) complex. HJ DNA is sandwiched between 2 RuvA tetramers; dsDNA enters through RuvA and exits via RuvB. An RuvB hexamer assembles on each DNA strand where it exits the tetramer. Each RuvB hexamer is contacted by two RuvA subunits (via domain III) on 2 adjacent RuvB subunits; this complex drives branch migration. In the full resolvosome a probable DNA-RuvA(4)-RuvB(12)-RuvC(2) complex forms which resolves the HJ.

It localises to the cytoplasm. Functionally, the RuvA-RuvB-RuvC complex processes Holliday junction (HJ) DNA during genetic recombination and DNA repair, while the RuvA-RuvB complex plays an important role in the rescue of blocked DNA replication forks via replication fork reversal (RFR). RuvA specifically binds to HJ cruciform DNA, conferring on it an open structure. The RuvB hexamer acts as an ATP-dependent pump, pulling dsDNA into and through the RuvAB complex. HJ branch migration allows RuvC to scan DNA until it finds its consensus sequence, where it cleaves and resolves the cruciform DNA. The protein is Holliday junction branch migration complex subunit RuvA of Neisseria gonorrhoeae (strain ATCC 700825 / FA 1090).